A 275-amino-acid chain; its full sequence is Pantothenate synthetase (275 aa).

26–33 contributes to the ATP binding site; it reads MGFLHEGH. His33 serves as the catalytic Proton donor. A (R)-pantoate-binding site is contributed by Gln57. Gln57 serves as a coordination point for beta-alanine. 143-146 is a binding site for ATP; that stretch reads GQKD. Gln149 serves as a coordination point for (R)-pantoate. ATP is bound by residues Ala172 and 180 to 183; that span reads RSSR.

This sequence belongs to the pantothenate synthetase family. In terms of assembly, homodimer.

The protein resides in the cytoplasm. It carries out the reaction (R)-pantoate + beta-alanine + ATP = (R)-pantothenate + AMP + diphosphate + H(+). The protein operates within cofactor biosynthesis; (R)-pantothenate biosynthesis; (R)-pantothenate from (R)-pantoate and beta-alanine: step 1/1. Its function is as follows. Catalyzes the condensation of pantoate with beta-alanine in an ATP-dependent reaction via a pantoyl-adenylate intermediate. The chain is Pantothenate synthetase from Gluconobacter oxydans (strain 621H) (Gluconobacter suboxydans).